The sequence spans 351 residues: Small ribosomal subunit biogenesis GTPase RsgA 1 (351 aa).

The CP-type G domain occupies 100–258 (LRTDAQIVAS…IIDTPGMREL (159 aa)). GTP-binding positions include 148–151 (SKVD) and 200–208 (GSSGAGKST). Residues cysteine 282, cysteine 287, histidine 289, and cysteine 295 each contribute to the Zn(2+) site.

It belongs to the TRAFAC class YlqF/YawG GTPase family. RsgA subfamily. Monomer. Associates with 30S ribosomal subunit, binds 16S rRNA. Zn(2+) serves as cofactor.

Its subcellular location is the cytoplasm. In terms of biological role, one of several proteins that assist in the late maturation steps of the functional core of the 30S ribosomal subunit. Helps release RbfA from mature subunits. May play a role in the assembly of ribosomal proteins into the subunit. Circularly permuted GTPase that catalyzes slow GTP hydrolysis, GTPase activity is stimulated by the 30S ribosomal subunit. This is Small ribosomal subunit biogenesis GTPase RsgA 1 from Oceanobacillus iheyensis (strain DSM 14371 / CIP 107618 / JCM 11309 / KCTC 3954 / HTE831).